Consider the following 253-residue polypeptide: (S)-2-haloacid dehalogenase (253 aa).

The Nucleophile role is filled by Asp8. Residues 9-10, Arg39, and 114-115 each bind an (S)-2-haloacid; these read AY and SN. Positions 171-176 are important for catalytic activity; the sequence is SSNGFD.

Belongs to the HAD-like hydrolase superfamily. S-2-haloalkanoic acid dehalogenase family. As to quaternary structure, homodimer.

The catalysed reaction is an (S)-2-haloacid + H2O = a (2R)-2-hydroxycarboxylate + a halide anion + H(+). It catalyses the reaction (S)-2-chloropropanoate + H2O = (R)-lactate + chloride + H(+). Its function is as follows. Catalyzes the hydrolytic dehalogenation of small (S)-2-haloalkanoic acids to yield the corresponding (R)-2-hydroxyalkanoic acids. Acts on acids of short chain lengths, C(2) to C(4), with inversion of configuration at C-2. Active with 2-halogenated carboxylic acids and converts only the S-isomer (or L-isomer) of 2-chloropropionic acid with inversion of configuration to produce R-lactate (or D-isomer). The polypeptide is (S)-2-haloacid dehalogenase (Xanthobacter autotrophicus).